Reading from the N-terminus, the 130-residue chain is Small ribosomal subunit protein uS8 (130 aa).

This sequence belongs to the universal ribosomal protein uS8 family. In terms of assembly, part of the 30S ribosomal subunit. Contacts proteins S5 and S12.

Functionally, one of the primary rRNA binding proteins, it binds directly to 16S rRNA central domain where it helps coordinate assembly of the platform of the 30S subunit. The protein is Small ribosomal subunit protein uS8 of Buchnera aphidicola subsp. Cinara cedri (strain Cc).